The sequence spans 259 residues: 3-methyl-2-oxobutanoate hydroxymethyltransferase (259 aa).

Positions 44 and 83 each coordinate Mg(2+). 3-methyl-2-oxobutanoate-binding positions include 44-45, aspartate 83, and lysine 113; that span reads DS. Glutamate 115 is a Mg(2+) binding site. The active-site Proton acceptor is the glutamate 183.

Belongs to the PanB family. Homodecamer; pentamer of dimers. Mg(2+) is required as a cofactor.

It localises to the cytoplasm. The catalysed reaction is 3-methyl-2-oxobutanoate + (6R)-5,10-methylene-5,6,7,8-tetrahydrofolate + H2O = 2-dehydropantoate + (6S)-5,6,7,8-tetrahydrofolate. It participates in cofactor biosynthesis; (R)-pantothenate biosynthesis; (R)-pantoate from 3-methyl-2-oxobutanoate: step 1/2. Its function is as follows. Catalyzes the reversible reaction in which hydroxymethyl group from 5,10-methylenetetrahydrofolate is transferred onto alpha-ketoisovalerate to form ketopantoate. This is 3-methyl-2-oxobutanoate hydroxymethyltransferase from Acaryochloris marina (strain MBIC 11017).